The sequence spans 404 residues: Sorting nexin-32 (404 aa).

Residues 1–10 (MEEQHQEAGN) show a composition bias toward basic and acidic residues. Residues 1 to 29 (MEEQHQEAGNESKPSSTSVDLQGDSPLQV) are disordered. Residues 11–20 (ESKPSSTSVD) show a composition bias toward polar residues. Residues 21 to 168 (LQGDSPLQVE…SVFLEYSQDL (148 aa)) enclose the PX domain. Residues 255–336 (TQEVNQLKRS…KARTRNREVR (82 aa)) adopt a coiled-coil conformation.

The protein belongs to the sorting nexin family.

Its function is as follows. May be involved in several stages of intracellular trafficking. This chain is Sorting nexin-32 (Snx32), found in Mus musculus (Mouse).